The sequence spans 733 residues: Polyribonucleotide nucleotidyltransferase (733 aa).

Positions 503 and 509 each coordinate Mg(2+). Residues 570–629 (PRLTTIQIPVDAIGMVIGKGGETIRSITEETGAEINIDDDGTVTIACSSPEATKAAVETI) enclose the KH domain. Residues 639–713 (GTIYMGKVRD…GKTKFALSIK (75 aa)) form the S1 motif domain.

Belongs to the polyribonucleotide nucleotidyltransferase family. Requires Mg(2+) as cofactor.

Its subcellular location is the cytoplasm. It carries out the reaction RNA(n+1) + phosphate = RNA(n) + a ribonucleoside 5'-diphosphate. Functionally, involved in mRNA degradation. Catalyzes the phosphorolysis of single-stranded polyribonucleotides processively in the 3'- to 5'-direction. This chain is Polyribonucleotide nucleotidyltransferase, found in Chlorobaculum tepidum (strain ATCC 49652 / DSM 12025 / NBRC 103806 / TLS) (Chlorobium tepidum).